Here is a 359-residue protein sequence, read N- to C-terminus: 3-dehydroquinate synthase (359 aa).

NAD(+) contacts are provided by residues 72–77, 106–110, 130–131, Lys143, Lys152, and 170–173; these read EGEIHK, GVIGD, TS, and CLKT. Zn(2+) contacts are provided by Glu185, His248, and His264.

It belongs to the sugar phosphate cyclases superfamily. Dehydroquinate synthase family. It depends on Co(2+) as a cofactor. The cofactor is Zn(2+). Requires NAD(+) as cofactor.

The protein localises to the cytoplasm. It carries out the reaction 7-phospho-2-dehydro-3-deoxy-D-arabino-heptonate = 3-dehydroquinate + phosphate. It participates in metabolic intermediate biosynthesis; chorismate biosynthesis; chorismate from D-erythrose 4-phosphate and phosphoenolpyruvate: step 2/7. In terms of biological role, catalyzes the conversion of 3-deoxy-D-arabino-heptulosonate 7-phosphate (DAHP) to dehydroquinate (DHQ). The protein is 3-dehydroquinate synthase of Dehalococcoides mccartyi (strain CBDB1).